Consider the following 450-residue polypeptide: Tubulin alpha-3 chain (450 aa).

Gln-11 is a binding site for GTP. An N6-acetyllysine modification is found at Lys-40. GTP-binding residues include Glu-71, Ser-140, Gly-144, Thr-145, Thr-179, Asn-206, and Asn-228. Glu-71 serves as a coordination point for Mg(2+). Residue Glu-254 is part of the active site.

The protein belongs to the tubulin family. In terms of assembly, dimer of alpha and beta chains. A typical microtubule is a hollow water-filled tube with an outer diameter of 25 nm and an inner diameter of 15 nM. Alpha-beta heterodimers associate head-to-tail to form protofilaments running lengthwise along the microtubule wall with the beta-tubulin subunit facing the microtubule plus end conferring a structural polarity. Microtubules usually have 13 protofilaments but different protofilament numbers can be found in some organisms and specialized cells. It depends on Mg(2+) as a cofactor. Post-translationally, undergoes a tyrosination/detyrosination cycle, the cyclic removal and re-addition of a C-terminal tyrosine residue by the enzymes tubulin tyrosine carboxypeptidase (TTCP) and tubulin tyrosine ligase (TTL), respectively. Acetylation of alpha chains at Lys-40 stabilizes microtubules and affects affinity and processivity of microtubule motors. This modification has a role in multiple cellular functions, ranging from cell motility, cell cycle progression or cell differentiation to intracellular trafficking and signaling. During the early stages of oogenesis lky/Alpha-tubulin N-acetyltransferase 2 is the main acetyltransferase responsible for Lys-40 acetylation in germline cells while Atat/alpha-tubulin N-acetyltransferase 1 is the main acetyltransferase responsible for Lys-40 acetylation in somatic cells.

It is found in the cytoplasm. The protein localises to the cytoskeleton. The catalysed reaction is GTP + H2O = GDP + phosphate + H(+). Its function is as follows. Tubulin is the major constituent of microtubules, a cylinder consisting of laterally associated linear protofilaments composed of alpha- and beta-tubulin heterodimers. Microtubules grow by the addition of GTP-tubulin dimers to the microtubule end, where a stabilizing cap forms. Below the cap, tubulin dimers are in GDP-bound state, owing to GTPase activity of alpha-tubulin. In Drosophila melanogaster (Fruit fly), this protein is Tubulin alpha-3 chain (alphaTub84D).